The chain runs to 176 residues: NADH-quinone oxidoreductase subunit I (176 aa).

4Fe-4S ferredoxin-type domains are found at residues 47–77 (LTRD…MQAA) and 87–116 (AWFR…MTSE). [4Fe-4S] cluster-binding residues include Cys-57, Cys-60, Cys-63, Cys-67, Cys-96, Cys-99, Cys-102, and Cys-106.

It belongs to the complex I 23 kDa subunit family. NDH-1 is composed of 14 different subunits. Subunits NuoA, H, J, K, L, M, N constitute the membrane sector of the complex. The cofactor is [4Fe-4S] cluster.

It localises to the cell inner membrane. The catalysed reaction is a quinone + NADH + 5 H(+)(in) = a quinol + NAD(+) + 4 H(+)(out). Functionally, NDH-1 shuttles electrons from NADH, via FMN and iron-sulfur (Fe-S) centers, to quinones in the respiratory chain. The immediate electron acceptor for the enzyme in this species is believed to be ubiquinone. Couples the redox reaction to proton translocation (for every two electrons transferred, four hydrogen ions are translocated across the cytoplasmic membrane), and thus conserves the redox energy in a proton gradient. This Syntrophotalea carbinolica (strain DSM 2380 / NBRC 103641 / GraBd1) (Pelobacter carbinolicus) protein is NADH-quinone oxidoreductase subunit I.